Reading from the N-terminus, the 420-residue chain is UDP-N-acetylglucosamine 1-carboxyvinyltransferase (420 aa).

22–23 (KN) is a binding site for phosphoenolpyruvate. A UDP-N-acetyl-alpha-D-glucosamine-binding site is contributed by Arg93. The active-site Proton donor is Cys117. 2-(S-cysteinyl)pyruvic acid O-phosphothioketal is present on Cys117. UDP-N-acetyl-alpha-D-glucosamine is bound by residues Asp307 and Ile329.

The protein belongs to the EPSP synthase family. MurA subfamily.

The protein localises to the cytoplasm. It catalyses the reaction phosphoenolpyruvate + UDP-N-acetyl-alpha-D-glucosamine = UDP-N-acetyl-3-O-(1-carboxyvinyl)-alpha-D-glucosamine + phosphate. It functions in the pathway cell wall biogenesis; peptidoglycan biosynthesis. Functionally, cell wall formation. Adds enolpyruvyl to UDP-N-acetylglucosamine. This is UDP-N-acetylglucosamine 1-carboxyvinyltransferase from Shewanella pealeana (strain ATCC 700345 / ANG-SQ1).